The chain runs to 453 residues: Bifunctional protein GlmU (453 aa).

The pyrophosphorylase stretch occupies residues 1 to 231 (MERTCLAVIL…EIEMTGCNTR (231 aa)). UDP-N-acetyl-alpha-D-glucosamine-binding positions include 10–13 (LAAG), Lys24, Gln77, 82–83 (GT), 105–107 (YGD), Gly143, Glu157, Asn172, and Asn229. Asp107 lines the Mg(2+) pocket. A Mg(2+)-binding site is contributed by Asn229. The linker stretch occupies residues 232–252 (AELAVIERFWQERRRHQMMLS). Positions 253-453 (GVTMIAPETV…AIKAAKKAKA (201 aa)) are N-acetyltransferase. 2 residues coordinate UDP-N-acetyl-alpha-D-glucosamine: Arg318 and Lys336. His348 (proton acceptor) is an active-site residue. UDP-N-acetyl-alpha-D-glucosamine contacts are provided by Tyr351 and Asn362. Acetyl-CoA contacts are provided by residues Ala365, 371-372 (NY), Ser390, Ser408, and Arg425.

It in the N-terminal section; belongs to the N-acetylglucosamine-1-phosphate uridyltransferase family. In the C-terminal section; belongs to the transferase hexapeptide repeat family. As to quaternary structure, homotrimer. Mg(2+) serves as cofactor.

It localises to the cytoplasm. The enzyme catalyses alpha-D-glucosamine 1-phosphate + acetyl-CoA = N-acetyl-alpha-D-glucosamine 1-phosphate + CoA + H(+). It catalyses the reaction N-acetyl-alpha-D-glucosamine 1-phosphate + UTP + H(+) = UDP-N-acetyl-alpha-D-glucosamine + diphosphate. It functions in the pathway nucleotide-sugar biosynthesis; UDP-N-acetyl-alpha-D-glucosamine biosynthesis; N-acetyl-alpha-D-glucosamine 1-phosphate from alpha-D-glucosamine 6-phosphate (route II): step 2/2. The protein operates within nucleotide-sugar biosynthesis; UDP-N-acetyl-alpha-D-glucosamine biosynthesis; UDP-N-acetyl-alpha-D-glucosamine from N-acetyl-alpha-D-glucosamine 1-phosphate: step 1/1. It participates in bacterial outer membrane biogenesis; LPS lipid A biosynthesis. Its function is as follows. Catalyzes the last two sequential reactions in the de novo biosynthetic pathway for UDP-N-acetylglucosamine (UDP-GlcNAc). The C-terminal domain catalyzes the transfer of acetyl group from acetyl coenzyme A to glucosamine-1-phosphate (GlcN-1-P) to produce N-acetylglucosamine-1-phosphate (GlcNAc-1-P), which is converted into UDP-GlcNAc by the transfer of uridine 5-monophosphate (from uridine 5-triphosphate), a reaction catalyzed by the N-terminal domain. The sequence is that of Bifunctional protein GlmU from Rhizobium johnstonii (strain DSM 114642 / LMG 32736 / 3841) (Rhizobium leguminosarum bv. viciae).